The sequence spans 171 residues: Ribosome maturation factor RimM (171 aa).

A PRC barrel domain is found at Glu97–Leu170.

It belongs to the RimM family. Binds ribosomal protein uS19.

The protein localises to the cytoplasm. In terms of biological role, an accessory protein needed during the final step in the assembly of 30S ribosomal subunit, possibly for assembly of the head region. Essential for efficient processing of 16S rRNA. May be needed both before and after RbfA during the maturation of 16S rRNA. It has affinity for free ribosomal 30S subunits but not for 70S ribosomes. The polypeptide is Ribosome maturation factor RimM (Bacillus cereus (strain ZK / E33L)).